The chain runs to 798 residues: Copalyl diphosphate synthase 1, chloroplastic (798 aa).

The transit peptide at 1-72 (MASLSTMHLI…SKVAGINRVA (72 aa)) directs the protein to the chloroplast. Substrate is bound at residue Lys251. 2 residues coordinate Mg(2+): Asp383 and Asp385. Residues 383–386 (DIDD) carry the DXDD motif motif. Lys469 is a binding site for substrate.

This sequence belongs to the terpene synthase family. Tpsc subfamily. Mg(2+) is required as a cofactor. In terms of tissue distribution, highly expressed in roots, and, at low levels, in stems and leaves.

The protein localises to the plastid. The protein resides in the chloroplast. It carries out the reaction (2E,6E,10E)-geranylgeranyl diphosphate = (+)-copalyl diphosphate. The protein operates within secondary metabolite biosynthesis; terpenoid biosynthesis. In terms of biological role, involved in the biosynthesis of ent-kaurene diterpenoids natural products such as oridonin, miltiradiene, eriocalyxin B and nezukol, known to exhibit antitumor, anti-inflammatory and antibacterial activities. Catalyzes the conversion of (2E,6E,10E)-geranylgeranyl diphosphate (GGPP) to (+)-copalyl diphosphate ((+)-CPP). The polypeptide is Copalyl diphosphate synthase 1, chloroplastic (Isodon rubescens (Rabdosia rubescens)).